Reading from the N-terminus, the 244-residue chain is L-xylulose reductase (244 aa).

An N-acetylmethionine modification is found at M1. 11–39 (LVTGAGKGIGRSTVLALKAAGAQVVAVSR) serves as a coordination point for NADP(+). R21 carries the omega-N-methylarginine modification. S136 lines the substrate pocket. Y149 functions as the Proton acceptor in the catalytic mechanism. The active site involves K153.

Belongs to the short-chain dehydrogenases/reductases (SDR) family. As to quaternary structure, homotetramer. In terms of tissue distribution, highly expressed in kidney and liver. Expressed in epididymis. Expressed at intermediate level in lung. Weakly expressed in brain, heart, spleen and testis.

It is found in the membrane. The enzyme catalyses xylitol + NADP(+) = L-xylulose + NADPH + H(+). Its function is as follows. Catalyzes the NADPH-dependent reduction of several pentoses, tetroses, trioses, alpha-dicarbonyl compounds and L-xylulose. Participates in the uronate cycle of glucose metabolism. May play a role in the water absorption and cellular osmoregulation in the proximal renal tubules by producing xylitol, an osmolyte, thereby preventing osmolytic stress from occurring in the renal tubules. This is L-xylulose reductase (DCXR) from Cavia porcellus (Guinea pig).